A 476-amino-acid polypeptide reads, in one-letter code: Siroheme synthase (476 aa).

The precorrin-2 dehydrogenase /sirohydrochlorin ferrochelatase stretch occupies residues 1–203; sequence MNYFPVFADL…RQIEAAKKEL (203 aa). NAD(+) is bound by residues 22–23 and 43–44; these read TI and QK. Ser128 bears the Phosphoserine mark. A uroporphyrinogen-III C-methyltransferase region spans residues 214–476; sequence GSVSLVGAGP…LDSLRIERVA (263 aa). Residue Pro223 participates in S-adenosyl-L-methionine binding. Catalysis depends on Asp246, which acts as the Proton acceptor. Lys268 functions as the Proton donor in the catalytic mechanism. Residues 299 to 301, Val304, 329 to 330, Met381, and Gly410 each bind S-adenosyl-L-methionine; these read GGD and TA.

In the N-terminal section; belongs to the precorrin-2 dehydrogenase / sirohydrochlorin ferrochelatase family. The protein in the C-terminal section; belongs to the precorrin methyltransferase family.

It catalyses the reaction uroporphyrinogen III + 2 S-adenosyl-L-methionine = precorrin-2 + 2 S-adenosyl-L-homocysteine + H(+). It carries out the reaction precorrin-2 + NAD(+) = sirohydrochlorin + NADH + 2 H(+). The enzyme catalyses siroheme + 2 H(+) = sirohydrochlorin + Fe(2+). The protein operates within cofactor biosynthesis; adenosylcobalamin biosynthesis; precorrin-2 from uroporphyrinogen III: step 1/1. Its pathway is cofactor biosynthesis; adenosylcobalamin biosynthesis; sirohydrochlorin from precorrin-2: step 1/1. It participates in porphyrin-containing compound metabolism; siroheme biosynthesis; precorrin-2 from uroporphyrinogen III: step 1/1. It functions in the pathway porphyrin-containing compound metabolism; siroheme biosynthesis; siroheme from sirohydrochlorin: step 1/1. The protein operates within porphyrin-containing compound metabolism; siroheme biosynthesis; sirohydrochlorin from precorrin-2: step 1/1. Multifunctional enzyme that catalyzes the SAM-dependent methylations of uroporphyrinogen III at position C-2 and C-7 to form precorrin-2 via precorrin-1. Then it catalyzes the NAD-dependent ring dehydrogenation of precorrin-2 to yield sirohydrochlorin. Finally, it catalyzes the ferrochelation of sirohydrochlorin to yield siroheme. The chain is Siroheme synthase from Mannheimia succiniciproducens (strain KCTC 0769BP / MBEL55E).